The primary structure comprises 178 residues: Caveolin-1 (178 aa).

Serine 2 carries the N-acetylserine modification. A Phosphoserine modification is found at serine 2. Positions 2-94 (SGGKYVDSEG…WKASFTTFTV (93 aa)) are required for homooligomerization. The Cytoplasmic portion of the chain corresponds to 2–104 (SGGKYVDSEG…TKYWFYRLLS (103 aa)). Lysine 5 is modified (N6-acetyllysine; alternate). Lysine 5 participates in a covalent cross-link: Glycyl lysine isopeptide (Lys-Gly) (interchain with G-Cter in ubiquitin); alternate. Tyrosine 6 bears the Phosphotyrosine mark. Serine 9 bears the Phosphoserine mark. Tyrosine 14 carries the phosphotyrosine; by ABL1 modification. At tyrosine 25 the chain carries Phosphotyrosine. Residues lysine 26, lysine 30, lysine 39, lysine 47, and lysine 57 each participate in a glycyl lysine isopeptide (Lys-Gly) (interchain with G-Cter in ubiquitin) cross-link. The interaction with CAVIN3 stretch occupies residues 82–94 (DGIWKASFTTFTV). The helical intramembrane region spans 105–125 (SLVGIPVALIWGIYFAILSFL). The Cytoplasmic segment spans residues 126-178 (YIWAVVPCIKSFLIKIQCISRIYSICIHTFCDPLYEAIGKIFSNIRISMQKEI). An interacts with SPRY1, SPRY2, SPRY3 and SPRY4 region spans residues 131 to 142 (VPCIKSFLIKIQ). Residues cysteine 133, cysteine 143, and cysteine 156 are each lipidated (S-palmitoyl cysteine). The interacts with SPRY1, SPRY2, and SPRY4 stretch occupies residues 149 to 160 (SICIHTFCDPLY). Positions 167–178 (FSNIRISMQKEI) are interacts with SPRY1, SPRY2, SPRY3 and SPRY4.

Belongs to the caveolin family. In terms of assembly, homooligomer. Interacts with GLIPR2. Interacts with NOSTRIN. Interacts with SNAP25 and STX1A. Interacts (via the N-terminus) with DPP4; the interaction is direct. Interacts with CTNNB1, CDH1 and JUP. Interacts with PACSIN2; this interaction induces membrane tubulation. Interacts with SLC7A9. Interacts with BMX and BTK. Interacts with TGFBR1. Interacts with CAVIN3 (via leucine-zipper domain) in a cholesterol-sensitive manner. Interacts with CAVIN1. Interacts with EHD2 in a cholesterol-dependent manner. Forms a ternary complex with UBXN6 and VCP; mediates CAV1 targeting to lysosomes for degradation. Interacts with ABCG1; this interaction regulates ABCG1-mediated cholesterol efflux. Interacts with NEU3; this interaction enhances NEU3 sialidase activity within caveola. Interacts (via C-terminus) with SPRY1, SPRY2 (via C-terminus), SPRY3, and SPRY4. Interacts with IGFBP5; this interaction allows trafficking of IGFBP5 from the plasma membrane to the nucleus. Post-translationally, phosphorylated at Tyr-14 by ABL1 in response to oxidative stress. Ubiquitinated. Undergo monoubiquitination and multi- and/or polyubiquitination. Monoubiquitination of N-terminal lysines promotes integration in a ternary complex with UBXN6 and VCP which promotes oligomeric CAV1 targeting to lysosomes for degradation. Ubiquitinated by ZNRF1; leading to degradation and modulation of the TLR4-mediated immune response.

The protein localises to the golgi apparatus membrane. Its subcellular location is the cell membrane. The protein resides in the membrane. It is found in the caveola. It localises to the membrane raft. In terms of biological role, may act as a scaffolding protein within caveolar membranes. Forms a stable heterooligomeric complex with CAV2 that targets to lipid rafts and drives caveolae formation. Mediates the recruitment of CAVIN proteins (CAVIN1/2/3/4) to the caveolae. Interacts directly with G-protein alpha subunits and can functionally regulate their activity. Involved in the costimulatory signal essential for T-cell receptor (TCR)-mediated T-cell activation. Its binding to DPP4 induces T-cell proliferation and NF-kappa-B activation in a T-cell receptor/CD3-dependent manner. Recruits CTNNB1 to caveolar membranes and may regulate CTNNB1-mediated signaling through the Wnt pathway. Negatively regulates TGFB1-mediated activation of SMAD2/3 by mediating the internalization of TGFBR1 from membrane rafts leading to its subsequent degradation. Binds 20(S)-hydroxycholesterol (20(S)-OHC). This Atelerix albiventris (Middle-African hedgehog) protein is Caveolin-1 (CAV1).